We begin with the raw amino-acid sequence, 444 residues long: Protein kinase C and casein kinase substrate in neurons protein 1 (444 aa).

Residues serine 2 and serine 79 each carry the phosphoserine modification. The region spanning 13–283 (EETTDSFWEV…AIRGADAQDD (271 aa)) is the F-BAR domain. A coiled-coil region spans residues 26–275 (KRTVKRIDDG…QVYRELEQAI (250 aa)). Threonine 184 is modified (phosphothreonine). The segment at 313 to 384 (AAKKEKQPKK…NGGSNPFDED (72 aa)) is disordered. Basic and acidic residues predominate over residues 314–324 (AKKEKQPKKAE). The segment covering 336–358 (ESTSQAGDRGSVSSYDRGQTYAT) has biased composition (polar residues). A phosphoserine mark is found at serine 346, serine 348, serine 349, serine 361, and serine 365. The 60-residue stretch at 385 to 444 (AKGVRVRALYDYDGQEQDELSFKAGDELTKLGEEDEQGWCRGRLDSGQLGLYPANYVEVV) folds into the SH3 domain. Tyrosine 394 is modified (phosphotyrosine). Residues serine 405 and serine 430 each carry the phosphoserine modification.

The protein belongs to the PACSIN family. As to quaternary structure, homodimer. May form heterooligomers with other PACSINs. Interacts with MAPT. Interacts (via SH3 domain) with SYNJ1 and WASL. Interacts (via SH3 domain) with DNM1; the interaction is reduced by DNM1 phosphorylation. Interacts with DNM2 and DNM3. Interacts with both COBL and DBNL. Identified in a complex composed of COBL, PACSIN1 and WASL. Interacts with EHD1 and EHD3. Interacts with TRPV4. Post-translationally, phosphorylated by casein kinase 2 (CK2) and protein kinase C (PKC).

The protein localises to the cytoplasm. The protein resides in the cell projection. It is found in the synapse. Its subcellular location is the synaptosome. It localises to the ruffle membrane. The protein localises to the membrane. The protein resides in the cytoplasmic vesicle membrane. It is found in the cytosol. Its subcellular location is the cell membrane. Functionally, binds to membranes via its F-BAR domain and mediates membrane tubulation. Plays a role in the reorganization of the microtubule cytoskeleton via its interaction with MAPT; this decreases microtubule stability and inhibits MAPT-induced microtubule polymerization. Plays a role in cellular transport processes by recruiting DNM1, DNM2 and DNM3 to membranes. Plays a role in the reorganization of the actin cytoskeleton and in neuron morphogenesis via its interaction with COBL and WASL, and by recruiting COBL to the cell cortex. Plays a role in the regulation of neurite formation, neurite branching and the regulation of neurite length. Required for normal synaptic vesicle endocytosis; this process retrieves previously released neurotransmitters to accommodate multiple cycles of neurotransmission. Required for normal excitatory and inhibitory synaptic transmission. This chain is Protein kinase C and casein kinase substrate in neurons protein 1 (PACSIN1), found in Bos taurus (Bovine).